A 308-amino-acid chain; its full sequence is tRNA pseudouridine synthase B (308 aa).

Catalysis depends on D45, which acts as the Nucleophile.

This sequence belongs to the pseudouridine synthase TruB family. Type 1 subfamily.

It catalyses the reaction uridine(55) in tRNA = pseudouridine(55) in tRNA. Its function is as follows. Responsible for synthesis of pseudouridine from uracil-55 in the psi GC loop of transfer RNAs. This Gloeothece citriformis (strain PCC 7424) (Cyanothece sp. (strain PCC 7424)) protein is tRNA pseudouridine synthase B.